The primary structure comprises 180 residues: Ribulose bisphosphate carboxylase small subunit, chloroplastic 2 (180 aa).

A chloroplast-targeting transit peptide spans 1-56; that stretch reads MASSVMSSAAVATSTNAAQASMVAPFTGLKSAASFPVSRKQNLDITSIASNGGRVQ.

It belongs to the RuBisCO small chain family. Heterohexadecamer of 8 large and 8 small subunits.

The protein resides in the plastid. It is found in the chloroplast. Its function is as follows. RuBisCO catalyzes two reactions: the carboxylation of D-ribulose 1,5-bisphosphate, the primary event in carbon dioxide fixation, as well as the oxidative fragmentation of the pentose substrate. Both reactions occur simultaneously and in competition at the same active site. Although the small subunit is not catalytic it is essential for maximal activity. This is Ribulose bisphosphate carboxylase small subunit, chloroplastic 2 from Petunia hybrida (Petunia).